Consider the following 237-residue polypeptide: tRNA1(Val) (adenine(37)-N6)-methyltransferase (237 aa).

It belongs to the methyltransferase superfamily. tRNA (adenine-N(6)-)-methyltransferase family.

It is found in the cytoplasm. It catalyses the reaction adenosine(37) in tRNA1(Val) + S-adenosyl-L-methionine = N(6)-methyladenosine(37) in tRNA1(Val) + S-adenosyl-L-homocysteine + H(+). Functionally, specifically methylates the adenine in position 37 of tRNA(1)(Val) (anticodon cmo5UAC). This chain is tRNA1(Val) (adenine(37)-N6)-methyltransferase, found in Bacteroides fragilis (strain YCH46).